The following is a 202-amino-acid chain: Adenylyl-sulfate kinase (202 aa).

31–38 (GLSASGKS) provides a ligand contact to ATP. The active-site Phosphoserine intermediate is the Ser-105.

This sequence belongs to the APS kinase family.

It catalyses the reaction adenosine 5'-phosphosulfate + ATP = 3'-phosphoadenylyl sulfate + ADP + H(+). Its pathway is sulfur metabolism; hydrogen sulfide biosynthesis; sulfite from sulfate: step 2/3. In terms of biological role, catalyzes the synthesis of activated sulfate. The chain is Adenylyl-sulfate kinase (MET14) from Saccharomyces pastorianus (Lager yeast).